The chain runs to 447 residues: Probable rhamnogalacturonase C (447 aa).

The N-terminal stretch at Met1–Ala19 is a signal peptide. N-linked (GlcNAc...) asparagine glycans are attached at residues Asn37 and Asn65. Cys40 and Cys66 are disulfide-bonded. Asp217 functions as the Proton donor in the catalytic mechanism. Cysteines 219 and 236 form a disulfide. 2 N-linked (GlcNAc...) asparagine glycosylation sites follow: Asn237 and Asn252. His291 is a catalytic residue. N-linked (GlcNAc...) asparagine glycosylation is present at Asn316. 2 disulfide bridges follow: Cys338–Cys344 and Cys366–Cys375.

This sequence belongs to the glycosyl hydrolase 28 family.

It localises to the secreted. Functionally, pectinolytic enzymes consist of four classes of enzymes: pectine lyase, polygalacturonase, pectin methylesterase and rhamnogalacturonase. Hydrolyzes alpha-D-galacturonopyranosyl-(1,2)-alpha-L-rhamnopyranosyl linkages in the backbone of the hairy regions of pectins. This is Probable rhamnogalacturonase C (rhgC) from Aspergillus flavus (strain ATCC 200026 / FGSC A1120 / IAM 13836 / NRRL 3357 / JCM 12722 / SRRC 167).